Consider the following 272-residue polypeptide: uncharacterized protein (272 aa).

Residues 20-133 (PVLIFIPGAN…PPINTFLPDS (114 aa)) enclose the AB hydrolase-1 domain.

It belongs to the AB hydrolase superfamily.

This is an uncharacterized protein from Staphylococcus aureus (strain MSSA476).